The sequence spans 462 residues: Juvenile hormone epoxide hydrolase (462 aa).

Residues Ile-4 to Leu-24 form a helical membrane-spanning segment. Asp-227 serves as the catalytic Nucleophile. Catalysis depends on Tyr-372, which acts as the Proton donor. Catalysis depends on His-428, which acts as the Proton acceptor.

This sequence belongs to the peptidase S33 family.

The protein resides in the microsome membrane. Its subcellular location is the endoplasmic reticulum membrane. It catalyses the reaction cis-stilbene oxide + H2O = (1R,2R)-hydrobenzoin. The catalysed reaction is 1-(4-methoxyphenyl)-N-methyl-N-[(3-methyloxetan-3-yl)methyl]methanamine + H2O = 2-{[(4-methoxybenzyl)(methyl)amino]methyl}-2-methylpropane-1,3-diol. Its function is as follows. Catalyzes juvenile hormone hydrolysis. This is Juvenile hormone epoxide hydrolase from Manduca sexta (Tobacco hawkmoth).